The chain runs to 362 residues: 3-dehydroquinate synthase (362 aa).

NAD(+) contacts are provided by residues 71 to 76, 105 to 109, 129 to 130, K142, K151, and 169 to 172; these read DGEQYK, GVVGD, TT, and CLKT. The Zn(2+) site is built by E184, H247, and H264.

Belongs to the sugar phosphate cyclases superfamily. Dehydroquinate synthase family. The cofactor is Co(2+). Requires Zn(2+) as cofactor. It depends on NAD(+) as a cofactor.

It is found in the cytoplasm. It catalyses the reaction 7-phospho-2-dehydro-3-deoxy-D-arabino-heptonate = 3-dehydroquinate + phosphate. The protein operates within metabolic intermediate biosynthesis; chorismate biosynthesis; chorismate from D-erythrose 4-phosphate and phosphoenolpyruvate: step 2/7. Functionally, catalyzes the conversion of 3-deoxy-D-arabino-heptulosonate 7-phosphate (DAHP) to dehydroquinate (DHQ). The protein is 3-dehydroquinate synthase of Escherichia coli (strain 55989 / EAEC).